Reading from the N-terminus, the 109-residue chain is Irditoxin subunit A (109 aa).

The first 19 residues, 1-19 (MKTLLLAVAVVAFVCLGSA), serve as a signal peptide directing secretion. A propeptide spanning residues 20–34 (DQLGLGRQQIDWGQG) is cleaved from the precursor. Q35 bears the Pyrrolidone carboxylic acid mark. 5 disulfides stabilise this stretch: C44–C66, C47–C55, C61–C85, C89–C100, and C101–C106.

This sequence belongs to the three-finger toxin family. Ancestral subfamily. Boigatoxin sub-subfamily. In terms of assembly, heterodimer of A and B chains; disulfide-linked. As to expression, expressed by the venom gland.

The protein resides in the secreted. This bird and reptile-specific postsynaptic neurotoxin inhibits the chick muscle alpha-1-beta-1-gamma-delta (CHRNA1-CHRNB1-CHRNG-CHNRD) nicotinic acetylcholine receptor (nAChR) 100-fold more compared with the mouse receptor. In vivo, produces rapid flaccid paralysis, dyspnea and increased respiratory rate in geckos. At sublethal doses geckos were immobilized for up to three days and then recovered. Chicks injected with lethal doses showed rapid onset of inactivity, dyspnea and neck droop, and no extended paralysis with survival was seen. The sequence is that of Irditoxin subunit A from Boiga irregularis (Brown tree snake).